Here is a 397-residue protein sequence, read N- to C-terminus: T-box transcription factor TBX19 (397 aa).

Residues 48–216 constitute a DNA-binding region (T-box); it reads LWQRFREVTN…YNPFAKAFLD (169 aa). Residues 220 to 248 form a disordered region; that stretch reads RNHPKDAPEAASEGQHMTYSHSPQAPHGC.

The protein resides in the nucleus. May be involved in the initial formation of the chordamesoderm. This Gallus gallus (Chicken) protein is T-box transcription factor TBX19.